Consider the following 159-residue polypeptide: Cyclic pyranopterin monophosphate synthase (159 aa).

Residues M75–H77 and M113–E114 contribute to the substrate site. D128 is an active-site residue.

Belongs to the MoaC family. As to quaternary structure, homohexamer; trimer of dimers.

It catalyses the reaction (8S)-3',8-cyclo-7,8-dihydroguanosine 5'-triphosphate = cyclic pyranopterin phosphate + diphosphate. Its pathway is cofactor biosynthesis; molybdopterin biosynthesis. Its function is as follows. Catalyzes the conversion of (8S)-3',8-cyclo-7,8-dihydroguanosine 5'-triphosphate to cyclic pyranopterin monophosphate (cPMP). In Desulfatibacillum aliphaticivorans, this protein is Cyclic pyranopterin monophosphate synthase.